We begin with the raw amino-acid sequence, 507 residues long: MELSPRAAELTNLFESRIRNFYANFQVDEIGRVVSVGDGIAQVYGLNEIQAGEMVLFANGVKGMALNLENENVGIVVFGGDTAIKEGDLVKRTGSIVDVPAGKAMLGRVVDAMGVPIDGRGALSDHEQRRVEVKAPGILERKSVHEPMQTGLKAVDSLVPIGRGQRELLIGDRQTGKTTIAIDTILNQKQINSRATSESETMYCVYVAIGQKRSTVGQLIQTLEEANALEYSILVAATASDPAPLQFLAPYSGCAMGEYFRDNGMHALIIYDDLSKQAVAYRQMSLLLRRPPGREAFPGDVFYLHSRLLERAAKRSDQTGAGSLTALPVIETQAGDVSAYIPTNVISITDGQICLETELFYRGIRPAINVGLSVSRVGSAAQLKAMKQVCGSSKLELAQYREVAAFAQFGSDLDAATQALLNRGARLTEVPKQPQYAPLPIEKQILVIYAAVNGFCDRMPLDRISQYEKAIPNSVKPELLQALKGGLTNERKMEPDAFLKERALALI.

Position 171-178 (171-178) interacts with ATP; that stretch reads GDRQTGKT.

Belongs to the ATPase alpha/beta chains family. In terms of assembly, F-type ATPases have 2 components, CF(1) - the catalytic core - and CF(0) - the membrane proton channel. CF(1) has five subunits: alpha(3), beta(3), gamma(1), delta(1), epsilon(1). CF(0) has three main subunits: a, b and c.

Its subcellular location is the mitochondrion. The protein resides in the mitochondrion inner membrane. In terms of biological role, mitochondrial membrane ATP synthase (F(1)F(0) ATP synthase or Complex V) produces ATP from ADP in the presence of a proton gradient across the membrane which is generated by electron transport complexes of the respiratory chain. F-type ATPases consist of two structural domains, F(1) - containing the extramembraneous catalytic core, and F(0) - containing the membrane proton channel, linked together by a central stalk and a peripheral stalk. During catalysis, ATP synthesis in the catalytic domain of F(1) is coupled via a rotary mechanism of the central stalk subunits to proton translocation. Subunits alpha and beta form the catalytic core in F(1). Rotation of the central stalk against the surrounding alpha(3)beta(3) subunits leads to hydrolysis of ATP in three separate catalytic sites on the beta subunits. Subunit alpha does not bear the catalytic high-affinity ATP-binding sites. In Raphanus sativus (Radish), this protein is ATP synthase subunit alpha, mitochondrial (ATPA).